Consider the following 188-residue polypeptide: dCTP deaminase (188 aa).

DCTP-binding positions include 111 to 116, 135 to 137, Gln156, Tyr170, and Gln180; these read KSTYAR and TLE. Glu137 serves as the catalytic Proton donor/acceptor.

This sequence belongs to the dCTP deaminase family. Homotrimer.

The catalysed reaction is dCTP + H2O + H(+) = dUTP + NH4(+). The protein operates within pyrimidine metabolism; dUMP biosynthesis; dUMP from dCTP (dUTP route): step 1/2. Its function is as follows. Catalyzes the deamination of dCTP to dUTP. The chain is dCTP deaminase from Laribacter hongkongensis (strain HLHK9).